A 137-amino-acid polypeptide reads, in one-letter code: MLQPKRTRFRKQFKGRIHGVSKGGTDLNFGAYGLKAVEPERITARQIEAARRAITRYMKRSGRVWIRIFPDLPVTSKPTEVRMGKGKGGVEYWAARVAPGRIIFEIDGVLEDVAREALRLGAAKLPIKTRFIQRLAE.

Belongs to the universal ribosomal protein uL16 family. Part of the 50S ribosomal subunit.

Functionally, binds 23S rRNA and is also seen to make contacts with the A and possibly P site tRNAs. This is Large ribosomal subunit protein uL16 from Bartonella quintana (strain Toulouse) (Rochalimaea quintana).